The following is a 161-amino-acid chain: Nucleotide-binding protein Geob_0921 (161 aa).

The protein belongs to the YajQ family.

Nucleotide-binding protein. This is Nucleotide-binding protein Geob_0921 from Geotalea daltonii (strain DSM 22248 / JCM 15807 / FRC-32) (Geobacter daltonii).